A 362-amino-acid polypeptide reads, in one-letter code: Formate dehydrogenase (362 aa).

The substrate site is built by V93 and N119. Residues 174–175, D195, 230–234, T256, D282, 311–314, and S357 contribute to the NAD(+) site; these read RI, PLHAG, and HYSG.

This sequence belongs to the D-isomer specific 2-hydroxyacid dehydrogenase family. FDH subfamily. Homodimer.

It is found in the cytoplasm. The enzyme catalyses formate + NAD(+) = CO2 + NADH. Its function is as follows. Catalyzes the NAD(+)-dependent oxidation of formate to carbon dioxide. Formate oxidation is the final step in the methanol oxidation pathway in methylotrophic microorganisms. Has a role in the detoxification of exogenous formate in non-methylotrophic organisms. The chain is Formate dehydrogenase from Pichia angusta (Yeast).